The primary structure comprises 2177 residues: Protein sidekick-2 (2177 aa).

The signal sequence occupies residues 1 to 26 (MKGLGVPAAALLWGGLSALLPPSLPA). The Extracellular portion of the chain corresponds to 27–1937 (DDVSPYFKTE…ANPFYEEWWF (1911 aa)). Ig-like C2-type domains are found at residues 31 to 113 (PYFK…TEVQ), 118 to 205 (GSFE…QPIT), 220 to 299 (PTII…SSVP), 313 to 401 (PQFV…TYLA), 407 to 496 (PNIT…ADLV), and 501 to 590 (TRIT…AHLR). A disulfide bond links C53 and C96. N-linked (GlcNAc...) asparagine glycans are attached at residues N198 and N228. Intrachain disulfides connect C242/C289 and C335/C385. Residue N408 is glycosylated (N-linked (GlcNAc...) asparagine). 2 cysteine pairs are disulfide-bonded: C428–C480 and C522–C574. N582, N614, N709, N748, N809, N941, and N953 each carry an N-linked (GlcNAc...) asparagine glycan. Fibronectin type-III domains are found at residues 597–693 (APES…LPEE), 698–794 (PPQN…TLQG), 799–898 (PPGN…THED), 902–996 (PVGH…VPPE), 1000–1099 (APTN…TLQA), 1104–1202 (APAN…TRES), 1207–1304 (GPSN…TLDD), 1305–1402 (VPGP…TEKR), 1407–1504 (PPSK…TLQA), 1509–1626 (APTI…VGEA), 1631–1727 (APQN…TQQA), 1731–1826 (APGS…TGPG), and 1829–1928 (APGP…AQKA). N1107, N1210, N1261, N1346, N1462, N1580, N1593, N1675, N1694, N1746, and N1820 each carry an N-linked (GlcNAc...) asparagine glycan. Residues 1938-1958 (LVVIALVGLIFILLLVFVLII) form a helical membrane-spanning segment. Residues 1959-2177 (RGQSKKYAKK…APIGGFSSFV (219 aa)) lie on the Cytoplasmic side of the membrane. Disordered regions lie at residues 2044–2071 (AESSSLTEKPSEVSDSQGSDSEYEVDPA) and 2103–2177 (QAYS…SSFV). Polar residues-rich tracts occupy residues 2045–2063 (ESSSLTEKPSEVSDSQGSD) and 2119–2130 (PLSNSTSTQQGS). Residues 2142–2151 (PQTPGNPPSQ) are compositionally biased toward pro residues. The short motif at 2171-2177 (GGFSSFV) is the PDZ-binding element.

It belongs to the sidekick family. Homodimer; mediates homophilic interactions to promote cell adhesion. As to expression, expressed by non-overlapping subsets of retinal neurons. SDK1, SDK2, DSCAM and DSCAML1 are expressed in non-overlapping subsets of interneurons and retinal ganglion cells (RGCs) that form synapses in distinct inner plexiform layer (IPL) sublaminae.

It is found in the cell membrane. It localises to the synapse. Its function is as follows. Adhesion molecule that promotes lamina-specific synaptic connections in the retina. Expressed in specific subsets of interneurons and retinal ganglion cells (RGCs) and promotes synaptic connectivity via homophilic interactions. This is Protein sidekick-2 from Gallus gallus (Chicken).